The following is a 246-amino-acid chain: NAD(P)H-quinone oxidoreductase subunit K (246 aa).

Positions 62, 63, 127, and 158 each coordinate [4Fe-4S] cluster.

It belongs to the complex I 20 kDa subunit family. In terms of assembly, NDH-1 can be composed of about 15 different subunits; different subcomplexes with different compositions have been identified which probably have different functions. [4Fe-4S] cluster serves as cofactor.

It is found in the cellular thylakoid membrane. The catalysed reaction is a plastoquinone + NADH + (n+1) H(+)(in) = a plastoquinol + NAD(+) + n H(+)(out). It carries out the reaction a plastoquinone + NADPH + (n+1) H(+)(in) = a plastoquinol + NADP(+) + n H(+)(out). In terms of biological role, NDH-1 shuttles electrons from an unknown electron donor, via FMN and iron-sulfur (Fe-S) centers, to quinones in the respiratory and/or the photosynthetic chain. The immediate electron acceptor for the enzyme in this species is believed to be plastoquinone. Couples the redox reaction to proton translocation, and thus conserves the redox energy in a proton gradient. Cyanobacterial NDH-1 also plays a role in inorganic carbon-concentration. The polypeptide is NAD(P)H-quinone oxidoreductase subunit K (Parasynechococcus marenigrum (strain WH8102)).